The following is a 160-amino-acid chain: Crossover junction endodeoxyribonuclease RuvC (160 aa).

Catalysis depends on residues Asp7, Glu73, and Asp145. Mg(2+) is bound by residues Asp7, Glu73, and Asp145.

This sequence belongs to the RuvC family. In terms of assembly, homodimer which binds Holliday junction (HJ) DNA. The HJ becomes 2-fold symmetrical on binding to RuvC with unstacked arms; it has a different conformation from HJ DNA in complex with RuvA. In the full resolvosome a probable DNA-RuvA(4)-RuvB(12)-RuvC(2) complex forms which resolves the HJ. Requires Mg(2+) as cofactor.

It localises to the cytoplasm. It carries out the reaction Endonucleolytic cleavage at a junction such as a reciprocal single-stranded crossover between two homologous DNA duplexes (Holliday junction).. In terms of biological role, the RuvA-RuvB-RuvC complex processes Holliday junction (HJ) DNA during genetic recombination and DNA repair. Endonuclease that resolves HJ intermediates. Cleaves cruciform DNA by making single-stranded nicks across the HJ at symmetrical positions within the homologous arms, yielding a 5'-phosphate and a 3'-hydroxyl group; requires a central core of homology in the junction. The consensus cleavage sequence is 5'-(A/T)TT(C/G)-3'. Cleavage occurs on the 3'-side of the TT dinucleotide at the point of strand exchange. HJ branch migration catalyzed by RuvA-RuvB allows RuvC to scan DNA until it finds its consensus sequence, where it cleaves and resolves the cruciform DNA. The chain is Crossover junction endodeoxyribonuclease RuvC from Synechococcus sp. (strain CC9311).